Here is a 338-residue protein sequence, read N- to C-terminus: S-adenosylmethionine:tRNA ribosyltransferase-isomerase (338 aa).

The protein belongs to the QueA family. In terms of assembly, monomer.

It is found in the cytoplasm. It catalyses the reaction 7-aminomethyl-7-carbaguanosine(34) in tRNA + S-adenosyl-L-methionine = epoxyqueuosine(34) in tRNA + adenine + L-methionine + 2 H(+). It functions in the pathway tRNA modification; tRNA-queuosine biosynthesis. Its function is as follows. Transfers and isomerizes the ribose moiety from AdoMet to the 7-aminomethyl group of 7-deazaguanine (preQ1-tRNA) to give epoxyqueuosine (oQ-tRNA). The sequence is that of S-adenosylmethionine:tRNA ribosyltransferase-isomerase from Francisella tularensis subsp. tularensis (strain WY96-3418).